The following is a 118-amino-acid chain: Small ribosomal subunit protein uS13 (118 aa).

The tract at residues 92 to 118 (RRNLPVRGQNTKNNARTRKGPTRPLKR) is disordered. Over residues 106–118 (ARTRKGPTRPLKR) the composition is skewed to basic residues.

It belongs to the universal ribosomal protein uS13 family. As to quaternary structure, part of the 30S ribosomal subunit. Forms a loose heterodimer with protein S19. Forms two bridges to the 50S subunit in the 70S ribosome.

Its function is as follows. Located at the top of the head of the 30S subunit, it contacts several helices of the 16S rRNA. In the 70S ribosome it contacts the 23S rRNA (bridge B1a) and protein L5 of the 50S subunit (bridge B1b), connecting the 2 subunits; these bridges are implicated in subunit movement. Contacts the tRNAs in the A and P-sites. This Psychrobacter arcticus (strain DSM 17307 / VKM B-2377 / 273-4) protein is Small ribosomal subunit protein uS13.